The chain runs to 35 residues: Photosystem II reaction center protein T (35 aa).

Residues 3 to 23 traverse the membrane as a helical segment; the sequence is ALVYTFLLVSTLGIIFFAIFF.

It belongs to the PsbT family. PSII is composed of 1 copy each of membrane proteins PsbA, PsbB, PsbC, PsbD, PsbE, PsbF, PsbH, PsbI, PsbJ, PsbK, PsbL, PsbM, PsbT, PsbY, PsbZ, Psb30/Ycf12, at least 3 peripheral proteins of the oxygen-evolving complex and a large number of cofactors. It forms dimeric complexes.

The protein localises to the plastid. The protein resides in the chloroplast thylakoid membrane. Its function is as follows. Found at the monomer-monomer interface of the photosystem II (PS II) dimer, plays a role in assembly and dimerization of PSII. PSII is a light-driven water plastoquinone oxidoreductase, using light energy to abstract electrons from H(2)O, generating a proton gradient subsequently used for ATP formation. The protein is Photosystem II reaction center protein T of Citrus sinensis (Sweet orange).